A 447-amino-acid chain; its full sequence is Phosphoglucosamine mutase (447 aa).

S107 serves as the catalytic Phosphoserine intermediate. The Mg(2+) site is built by S107, D246, D248, and D250. S107 bears the Phosphoserine mark.

Belongs to the phosphohexose mutase family. Mg(2+) is required as a cofactor. In terms of processing, activated by phosphorylation.

It catalyses the reaction alpha-D-glucosamine 1-phosphate = D-glucosamine 6-phosphate. Its function is as follows. Catalyzes the conversion of glucosamine-6-phosphate to glucosamine-1-phosphate. This chain is Phosphoglucosamine mutase, found in Ralstonia nicotianae (strain ATCC BAA-1114 / GMI1000) (Ralstonia solanacearum).